A 227-amino-acid chain; its full sequence is 2,3-bisphosphoglycerate-dependent phosphoglycerate mutase (227 aa).

Substrate contacts are provided by residues 7–14 (RHGQSEWN), 20–21 (TG), Arg-59, 86–89 (ERHY), Lys-97, 113–114 (RR), and 182–183 (GN). His-8 functions as the Tele-phosphohistidine intermediate in the catalytic mechanism. Glu-86 serves as the catalytic Proton donor/acceptor.

Belongs to the phosphoglycerate mutase family. BPG-dependent PGAM subfamily. As to quaternary structure, homodimer.

The enzyme catalyses (2R)-2-phosphoglycerate = (2R)-3-phosphoglycerate. It participates in carbohydrate degradation; glycolysis; pyruvate from D-glyceraldehyde 3-phosphate: step 3/5. In terms of biological role, catalyzes the interconversion of 2-phosphoglycerate and 3-phosphoglycerate. The polypeptide is 2,3-bisphosphoglycerate-dependent phosphoglycerate mutase (Neisseria meningitidis serogroup C (strain 053442)).